We begin with the raw amino-acid sequence, 158 residues long: Cyclic pyranopterin monophosphate synthase (158 aa).

Residues 75-77 (LCH) and 113-114 (ME) each bind substrate. Aspartate 128 is an active-site residue.

Belongs to the MoaC family. Homohexamer; trimer of dimers.

The catalysed reaction is (8S)-3',8-cyclo-7,8-dihydroguanosine 5'-triphosphate = cyclic pyranopterin phosphate + diphosphate. The protein operates within cofactor biosynthesis; molybdopterin biosynthesis. Its function is as follows. Catalyzes the conversion of (8S)-3',8-cyclo-7,8-dihydroguanosine 5'-triphosphate to cyclic pyranopterin monophosphate (cPMP). The sequence is that of Cyclic pyranopterin monophosphate synthase from Polynucleobacter asymbioticus (strain DSM 18221 / CIP 109841 / QLW-P1DMWA-1) (Polynucleobacter necessarius subsp. asymbioticus).